The sequence spans 145 residues: Ribosomal RNA large subunit methyltransferase H (145 aa).

S-adenosyl-L-methionine-binding positions include Leu-64, Gly-93, and Leu-112–Phe-117.

The protein belongs to the RNA methyltransferase RlmH family. Homodimer.

It localises to the cytoplasm. The enzyme catalyses pseudouridine(1915) in 23S rRNA + S-adenosyl-L-methionine = N(3)-methylpseudouridine(1915) in 23S rRNA + S-adenosyl-L-homocysteine + H(+). Functionally, specifically methylates the pseudouridine at position 1915 (m3Psi1915) in 23S rRNA. The chain is Ribosomal RNA large subunit methyltransferase H from Prochlorococcus marinus (strain NATL1A).